The primary structure comprises 65 residues: UPF0434 protein BBta_0300 (65 aa).

The protein belongs to the UPF0434 family.

This is UPF0434 protein BBta_0300 from Bradyrhizobium sp. (strain BTAi1 / ATCC BAA-1182).